Consider the following 152-residue polypeptide: Anaerobic nitrite reductase HBI (152 aa).

In terms of domain architecture, Globin spans 2-151 (ALTEKQEALL…LVATIKAEMK (150 aa)). The Homodimerization motif lies at 35–39 (EAAPE). Positions 45, 59, 63, 93, and 98 each coordinate heme b. Residues 105–117 (DPHFEVMKGALLG) carry the Homodimerization motif.

It belongs to the plant globin family. In terms of assembly, homodimer. It depends on heme b as a cofactor. Root nodules.

It is found in the cytoplasm. It localises to the nucleus. It carries out the reaction Fe(III)-heme b-[protein] + nitric oxide + H2O = Fe(II)-heme b-[protein] + nitrite + 2 H(+). Phytoglobin that reduces nitrite to nitric oxide (NO) under anoxic conditions (e.g. during flooding or in waterlogged soil) and upon root nodulation. Required for general plant development and during nodulation, especially for the onset of symbiosis. Monitors nitric oxide (NO) levels during early phase of the nitrogen-fixing symbiosis and buffers oxygen in functioning nodules. May not function as an oxygen storage or transport protein. Has an unusually high affinity for O(2) through a hexacoordinate heme iron because of a very low dissociation constant. In Casuarina glauca (Swamp oak), this protein is Anaerobic nitrite reductase HBI.